Reading from the N-terminus, the 213-residue chain is Probable nicotinate-nucleotide adenylyltransferase (213 aa).

Belongs to the NadD family.

The enzyme catalyses nicotinate beta-D-ribonucleotide + ATP + H(+) = deamido-NAD(+) + diphosphate. It functions in the pathway cofactor biosynthesis; NAD(+) biosynthesis; deamido-NAD(+) from nicotinate D-ribonucleotide: step 1/1. Functionally, catalyzes the reversible adenylation of nicotinate mononucleotide (NaMN) to nicotinic acid adenine dinucleotide (NaAD). The protein is Probable nicotinate-nucleotide adenylyltransferase of Pectobacterium atrosepticum (strain SCRI 1043 / ATCC BAA-672) (Erwinia carotovora subsp. atroseptica).